Consider the following 314-residue polypeptide: MGSQALPPGPMQTLIFFDMEATGLPFSQPKVTELCLLAVHRCALESPPTSQGPPPTVPPPPRVVDKLSLCVAPGKACSPAASEITGLSTAVLAAHGRQCFDDNLANLLLAFLRRQPQPWCLVAHNGDRYDFPLLQAELAMLGLTSALDGAFCVDSITALKALERASSPSEHGPRKSYSLGSIYTRLYGQSPPDSHTAEGDVLALLSICQWRPQALLRWVDAHARPFGTIRPMYGVTASARTKPRPSAVTTTAHLATTRNTSPSLGESRGTKDLPPVKDPGALSREGLLAPLGLLAILTLAVATLYGLSLATPGE.

2 residues coordinate Mg(2+): Asp18 and Glu20. Substrate is bound at residue 20-21 (EA). Ser78 carries the phosphoserine modification. A substrate-binding site is contributed by Tyr129. Residue Ser167 is modified to Phosphoserine. His195 acts as the Proton donor/acceptor in catalysis. Residue Asp200 coordinates Mg(2+). Asp200 serves as a coordination point for substrate. Residues 236-314 (TASARTKPRP…YGLSLATPGE (79 aa)) form a necessary for endoplasmic reticulum localization region. Positions 240 to 278 (RTKPRPSAVTTTAHLATTRNTSPSLGESRGTKDLPPVKD) are disordered. The tract at residues 243-314 (PRPSAVTTTA…YGLSLATPGE (72 aa)) is interaction with UBQLN1. Residues 247 to 260 (AVTTTAHLATTRNT) show a composition bias toward low complexity. Ser261 carries the post-translational modification Phosphoserine. The tract at residues 281–314 (ALSREGLLAPLGLLAILTLAVATLYGLSLATPGE) is necessary for cytoplasmic retention.

Belongs to the exonuclease superfamily. TREX family. In terms of assembly, homodimer. Interacts (via proline-rich region) with TCERG1/CA150 (via the second WW domain). Component of the SET complex, composed of at least ANP32A, APEX1, HMGB2, NME1, SET and TREX1. Within this complex, directly interacts with SET; this interaction does not result in TREX1 inhibition. Also interacts with NME1, but only following translocation to the nucleus. Directly interacts with UBQLN1 (via ubiquitin-like domain); the interaction may control TREX1 subcellular location. The cofactor is Mg(2+). Ubiquitinated, but not targeted to proteasomal degradation. Ubiquitination may be important for interaction with UBQLN1. As to expression, detected in thymus, spleen, liver, brain, heart, small intestine and colon.

The protein localises to the nucleus. Its subcellular location is the cytoplasm. The protein resides in the cytosol. It localises to the endoplasmic reticulum membrane. It catalyses the reaction Exonucleolytic cleavage in the 3'- to 5'-direction to yield nucleoside 5'-phosphates.. In terms of biological role, major cellular 3'-to-5' DNA exonuclease which digests single-stranded DNA (ssDNA) and double-stranded DNA (dsDNA) with mismatched 3' termini. Prevents cell-intrinsic initiation of autoimmunity. Acts by metabolizing DNA fragments from endogenous retroelements, including L1, LTR and SINE elements. Plays a key role in degradation of DNA fragments at cytosolic micronuclei arising from genome instability: its association with the endoplasmic reticulum membrane directs TREX1 to ruptured micronuclei, leading to micronuclear DNA degradation. Micronuclear DNA degradation is required to limit CGAS activation and subsequent inflammation. Unless degraded, these DNA fragments accumulate in the cytosol and activate the cGAS-STING innate immune signaling, leading to the production of type I interferon. Prevents chronic ATM-dependent checkpoint activation, by processing ssDNA polynucleotide species arising from the processing of aberrant DNA replication intermediates. Inefficiently degrades oxidized DNA, such as that generated upon antimicrobial reactive oxygen production or upon absorption of UV light. During GZMA-mediated cell death, contributes to DNA damage in concert with NME1. NME1 nicks one strand of DNA and TREX1 removes bases from the free 3' end to enhance DNA damage and prevent DNA end reannealing and rapid repair. This chain is Three-prime repair exonuclease 1, found in Homo sapiens (Human).